An 85-amino-acid chain; its full sequence is Cell division topological specificity factor (85 aa).

Belongs to the MinE family.

Prevents the cell division inhibition by proteins MinC and MinD at internal division sites while permitting inhibition at polar sites. This ensures cell division at the proper site by restricting the formation of a division septum at the midpoint of the long axis of the cell. The polypeptide is Cell division topological specificity factor (Thioalkalivibrio sulfidiphilus (strain HL-EbGR7)).